A 193-amino-acid chain; its full sequence is Crossover junction endodeoxyribonuclease RuvC (193 aa).

Catalysis depends on residues aspartate 7, glutamate 68, and aspartate 141. 3 residues coordinate Mg(2+): aspartate 7, glutamate 68, and aspartate 141. Residues 174–193 are disordered; the sequence is RQWAQATQHATRRRGVRRGM. The span at 183-193 shows a compositional bias: basic residues; that stretch reads ATRRRGVRRGM.

It belongs to the RuvC family. In terms of assembly, homodimer which binds Holliday junction (HJ) DNA. The HJ becomes 2-fold symmetrical on binding to RuvC with unstacked arms; it has a different conformation from HJ DNA in complex with RuvA. In the full resolvosome a probable DNA-RuvA(4)-RuvB(12)-RuvC(2) complex forms which resolves the HJ. It depends on Mg(2+) as a cofactor.

It localises to the cytoplasm. The enzyme catalyses Endonucleolytic cleavage at a junction such as a reciprocal single-stranded crossover between two homologous DNA duplexes (Holliday junction).. Functionally, the RuvA-RuvB-RuvC complex processes Holliday junction (HJ) DNA during genetic recombination and DNA repair. Endonuclease that resolves HJ intermediates. Cleaves cruciform DNA by making single-stranded nicks across the HJ at symmetrical positions within the homologous arms, yielding a 5'-phosphate and a 3'-hydroxyl group; requires a central core of homology in the junction. The consensus cleavage sequence is 5'-(A/T)TT(C/G)-3'. Cleavage occurs on the 3'-side of the TT dinucleotide at the point of strand exchange. HJ branch migration catalyzed by RuvA-RuvB allows RuvC to scan DNA until it finds its consensus sequence, where it cleaves and resolves the cruciform DNA. This chain is Crossover junction endodeoxyribonuclease RuvC, found in Bifidobacterium animalis subsp. lactis (strain AD011).